Consider the following 152-residue polypeptide: Isoquinoline 1-oxidoreductase subunit alpha (152 aa).

In terms of domain architecture, 2Fe-2S ferredoxin-type spans 1–77 (MIEFILNGQP…RQSVTTIEGL (77 aa)). Positions 39, 44, and 47 each coordinate [2Fe-2S] cluster.

Heterodimer of an alpha chain and a beta chain.

It carries out the reaction isoquinoline + A + H2O = isoquinolin-1(2H)-one + AH2. Specific towards N-containing N-heterocyclic substrates, including isoquinoline, isoquinolin-5-ol, phthalazine and quinazoline. The protein is Isoquinoline 1-oxidoreductase subunit alpha (iorA) of Brevundimonas diminuta (Pseudomonas diminuta).